The primary structure comprises 271 residues: Phosphonates import ATP-binding protein PhnC 2 (271 aa).

In terms of domain architecture, ABC transporter spans 2 to 245 (LVVEGLTCRF…IARELYDLEA (244 aa)). 34-41 (GRSGAGKS) serves as a coordination point for ATP.

This sequence belongs to the ABC transporter superfamily. Phosphonates importer (TC 3.A.1.9.1) family. The complex is composed of two ATP-binding proteins (PhnC), two transmembrane proteins (PhnE) and a solute-binding protein (PhnD).

It localises to the cell inner membrane. The enzyme catalyses phosphonate(out) + ATP + H2O = phosphonate(in) + ADP + phosphate + H(+). Part of the ABC transporter complex PhnCDE involved in phosphonates import. Responsible for energy coupling to the transport system. The chain is Phosphonates import ATP-binding protein PhnC 2 from Rhodopseudomonas palustris (strain BisB18).